The following is a 151-amino-acid chain: uncharacterized protein (151 aa).

This sequence to equivalent protein in phage 82.

This is an uncharacterized protein from Escherichia coli (strain K12).